The chain runs to 1926 residues: Myosin-15 (1926 aa).

Residues 29–79 (DGKKKCWIPDGENAYIEAEVKGSEDDGTVIVETADGESLSIKEDKIQQMNP) form the Myosin N-terminal SH3-like domain. One can recognise a Myosin motor domain in the interval 83–770 (EMIEDMAMLT…FLGQLEAIRD (688 aa)). Lys127 carries the N6,N6,N6-trimethyllysine modification. Residue 176–183 (GESGAGKT) participates in ATP binding. Actin-binding regions lie at residues 647–669 (LNKL…NPNV) and 749–763 (RFGI…GFLG). An IQ domain is found at 773-802 (LSKVFTLFQARAQGKLMRIKFQKILEERDA). Residues 833 to 1926 (KSSEVGEEVA…REFGKKVQEE (1094 aa)) adopt a coiled-coil conformation.

The protein belongs to the TRAFAC class myosin-kinesin ATPase superfamily. Myosin family. As to quaternary structure, muscle myosin is a hexameric protein that consists of 2 heavy chain subunits (MHC), 2 alkali light chain subunits (MLC) and 2 regulatory light chain subunits (MLC-2).

The protein localises to the cytoplasm. It localises to the myofibril. Muscle contraction. The sequence is that of Myosin-15 (MYH15) from Homo sapiens (Human).